The sequence spans 443 residues: Cysteine proteinase B (443 aa).

The signal sequence occupies residues 1 to 27 (MATSRAALCAVAVVCVVLAAACAPARA). Positions 28-125 (IHVGTPAAAL…YRKARADLSA (98 aa)) are cleaved as a propeptide — activation peptide. Intrachain disulfides connect C147/C188 and C181/C226. The active site involves C150. The N-linked (GlcNAc...) asparagine glycan is linked to N228. C281 and C329 are disulfide-bonded. Active-site residues include H288 and N308.

The protein belongs to the peptidase C1 family.

In Leishmania mexicana, this protein is Cysteine proteinase B (LMCPB).